A 1044-amino-acid chain; its full sequence is MPGIVVFRRRWSVGSDDLVLPAIFLFLLHTTWFVILSVVLFGLVYNPHEACSLNLVDHGRGYLGILLSCMIAEMAIIWLSMRGGILYTEPRDSMQYVLYVRLAILVIEFIYAIVGIVWLTQYYTSCNDLTAKNVTLGMVVCNWVVILSVCITVLCVFDPTGRTFVKLRATKRRQRNLRTYNLRHRLEEGQATSWSRRLKVFLCCTRTKDSQSDAYSEIAYLFAEFFRDLDIVPSDIIAGLVLLRQRQRAKRNAVLDEANNDILAFLSGMPVTRNTKYLDLKNSHEMLRYKEVCYYMLFALAAYGWPMYLMRKPTCGLCQLARSCSCCLCPARPRFAPGVTIEEDNCCGCNAIAIRRHFLDENMTAVDIVYTSCHDAVYETPFYVAVDHDKKKVVISIRGTLSPKDALTDLTGDAERLPVEGHRGTWLGHKGMVLSAEYIKKKLEQEMVLSQAFGRDLGRGTKHYGLIVVGHSLGAGTAAILSFLLRPQYPTLKCFAYSPPGGLLSEDAMEYSKEFVTAVVLGKDLVPRIGLSQLEGFRRQLLDVLQRSTKPKWRIIVGATKCIPKSELPEDQVEVTALASTRLWTHPSDLTIALSASTPLYPPGRIIHVVHNHPAEQCCCCEQEEPTYFAIWGDNKAFNEVIISPAMLHEHLPYVVMEGLNKVLENYNKGKTALLSAAKVMVSPTEVDLTPELIFQQQPLPTGPPLPTGLALELPATEHRNSSVRSKSQSEMSLEGFSEGRLLSPVAAASAARQDPVELLLLSTQERLAAELQSRRAPLATMESLSDTESLYSFDSRRSSGFRSIRGSPSLHAVLERDEGHLFYIDPAIPEENPSLSSRTELLAADSLSKHSQDTQPLEAALGSGGVTPERPPSAANDEEEAAGGSEGGGVAPRGELALHNGRLGDSPSPQVLEFAEFIDSLFNLDSKSSSFQDLYCMMVPESPTSDYTEGPKSPSQQEILLRAQFEPNLVPKPPRLFAGSAEPSSGISLSPSFPLSSSGELMDLTPTGLSSQECLATDKIRTSTPTGHGASPTKQDDLVISAR.

The Cytoplasmic portion of the chain corresponds to 1 to 22 (MPGIVVFRRRWSVGSDDLVLPA). The chain crosses the membrane as a helical span at residues 23-43 (IFLFLLHTTWFVILSVVLFGL). Over 44–60 (VYNPHEACSLNLVDHGR) the chain is Extracellular. Residues 61 to 81 (GYLGILLSCMIAEMAIIWLSM) form a helical membrane-spanning segment. The Cytoplasmic portion of the chain corresponds to 82–101 (RGGILYTEPRDSMQYVLYVR). Residues 102 to 122 (LAILVIEFIYAIVGIVWLTQY) traverse the membrane as a helical segment. Residues 123–136 (YTSCNDLTAKNVTL) lie on the Extracellular side of the membrane. The N-linked (GlcNAc...) asparagine glycan is linked to N133. The chain crosses the membrane as a helical span at residues 137–157 (GMVVCNWVVILSVCITVLCVF). Topologically, residues 158 to 1044 (DPTGRTFVKL…KQDDLVISAR (887 aa)) are cytoplasmic. Residues S472 and D524 each act as charge relay system in the active site. A phosphoserine mark is found at S728, S730, S733, S744, S784, S786, S808, S810, S835, S849, and S954. The tract at residues 848 to 905 (LSKHSQDTQPLEAALGSGGVTPERPPSAANDEEEAAGGSEGGGVAPRGELALHNGRLG) is disordered. Residues 1013-1044 (QECLATDKIRTSTPTGHGASPTKQDDLVISAR) form a disordered region. T1025 bears the Phosphothreonine mark.

The protein belongs to the AB hydrolase superfamily. Lipase family. In terms of assembly, interacts (via C-terminal) with CAMK2A; leading to the phosphorylation and inhibition of DAGLA enzymatic activity. Interacts (via PPXXF motif) with HOMER1 and HOMER2; this interaction is required for DAGLA membrane localization. Requires Ca(2+) as cofactor. Phosphorylated at Ser-784 and Ser-810 by CAMK2A; phosphorylation by CAMK2A inhibits diacylglycerol lipase activity.

It is found in the cell membrane. It localises to the cell projection. The protein resides in the dendritic spine membrane. The protein localises to the postsynaptic density membrane. Its subcellular location is the early endosome membrane. It catalyses the reaction a 1,2-diacyl-sn-glycerol + H2O = a 2-acylglycerol + a fatty acid + H(+). The enzyme catalyses 1-octadecanoyl-2-(5Z,8Z,11Z,14Z-eicosatetraenoyl)-sn-glycerol + H2O = 2-(5Z,8Z,11Z,14Z-eicosatetraenoyl)-glycerol + octadecanoate + H(+). It carries out the reaction 1,2-di-(9Z-octadecenoyl)-sn-glycerol + H2O = 2-(9Z-octadecenoyl)-glycerol + (9Z)-octadecenoate + H(+). The catalysed reaction is 1-(9Z-octadecenoyl)-2-(5Z,8Z,11Z,14Z-eicosatetraenoyl)-sn-glycerol + H2O = 2-(5Z,8Z,11Z,14Z-eicosatetraenoyl)-glycerol + (9Z)-octadecenoate + H(+). It catalyses the reaction 1-(9Z-octadecenoyl)-2-octadecanoyl-sn-glycerol + H2O = 2-octadecanoylglycerol + (9Z)-octadecenoate + H(+). The enzyme catalyses 1-(9Z-octadecenoyl)-2-(9Z,12Z-octadecadienoyl)-sn-glycerol + H2O = 2-(9Z,12Z-octadecadienoyl)-glycerol + (9Z)-octadecenoate + H(+). It carries out the reaction 1-(9Z-octadecenoyl)-2-O-(5Z,8Z,11Z,14Z-eicosatetraenyl)-sn-glycerol + H2O = 2-O-(5Z,8Z,11Z,14Z)-eicosatetraenylglycerol + (9Z)-octadecenoate + H(+). With respect to regulation, inhibited by 1,2,3-triazole urea covalent inhibitors KT172, DH376 and DO34. Inhibited by p-hydroxy-mercuri-benzoate and HgCl(2), but not to PMSF. Also inhibited by RHC80267. Diacylglycerol lipase activity is inhibited by the phosphorylation of Ser-784 and Ser-810 by CAMK2A. Serine hydrolase that hydrolyzes arachidonic acid-esterified diacylglycerols (DAGs) to produce the principal endocannabinoid, 2-arachidonoylglycerol (2-AG). Preferentially hydrolyzes sn-1 fatty acids from diacylglycerols (DAG) that contain arachidonic acid (AA) esterified at the sn-2 position to biosynthesize 2-AG. Has negligible activity against other lipids including monoacylglycerols and phospholipids. Plays a key role in regulating 2-AG signaling in the CNS. Controls the activity of 2-AG as a retrograde messenger at neuronal synapses. Supports axonal growth during development and adult neurogenesis. Plays a role for eCB signaling in the physiological regulation of anxiety and depressive behaviors. Also regulates neuroinflammatory responses in the brain, in particular, LPS-induced microglial activation. This Rattus norvegicus (Rat) protein is Diacylglycerol lipase-alpha (Dagla).